A 135-amino-acid chain; its full sequence is UPF0355 protein SACOL0457 (135 aa).

It belongs to the UPF0355 family.

In Staphylococcus aureus (strain COL), this protein is UPF0355 protein SACOL0457.